The following is a 441-amino-acid chain: MAGASTSRKSYGRIFTLLRDHNKWFENSIPLIASENIPSPAVREALISDFGNRYAEGWPGERVYAGCTYIDMVETECMKLAKKLFKAEFADVRPVSGVVANLAIYSAFSDPGDVMIAPSIPAGGHISHGRKEHSGTAGLVHGLEVEFYPFDAKSMTIDVDATKAKIIDLEKAGRTPKIAMFGGSLFLFPHPVKELAEFMKGRGMHINYDGAHVAGLIAGGQFQDPIREGADTMTMSTHKTLFGPQGGLVLGRNEHAEGIKKAMFPGLTSSHHIHHMAAKAVAFTEALEFGKKYAKDVVRNAKALAESLSGLGFKVLGEDGGFTKSHQVAVNVLEYSDGGKIEARLEKANIIVNRQLIPGDIKAGRHYLHPGGIRLGVSEVTRLGMGTGEMAEIAELMKQAVTERGDPKRLASKVKSFRKPFQKVQYCFDKKLPAYEYVKLR.

124-126 (GHI) is a (6S)-5,6,7,8-tetrahydrofolate binding site. The residue at position 239 (lysine 239) is an N6-(pyridoxal phosphate)lysine.

The protein belongs to the SHMT family. In terms of assembly, homodimer. Pyridoxal 5'-phosphate is required as a cofactor.

It is found in the cytoplasm. Its pathway is amino-acid biosynthesis; glycine biosynthesis; glycine from L-serine: step 1/1. Its function is as follows. Catalyzes the reversible interconversion of serine and glycine with a modified folate serving as the one-carbon carrier. Also exhibits a pteridine-independent aldolase activity toward beta-hydroxyamino acids, producing glycine and aldehydes, via a retro-aldol mechanism. The polypeptide is Serine hydroxymethyltransferase (Cenarchaeum symbiosum (strain A)).